We begin with the raw amino-acid sequence, 607 residues long: Phosphoenolpyruvate carboxykinase [GTP] (607 aa).

Substrate contacts are provided by residues R81 and 221–223 (YGG). K230 and H250 together coordinate Mn(2+). S272 lines the substrate pocket. Residue 273–278 (ACGKTN) coordinates GTP. Residue C274 is part of the active site. Residue D297 participates in Mn(2+) binding. 388 to 390 (NSR) is a substrate binding site. GTP is bound by residues R390, R421, and 516-519 (FGDN).

The protein belongs to the phosphoenolpyruvate carboxykinase [GTP] family. As to quaternary structure, monomer. It depends on Mn(2+) as a cofactor.

It localises to the cytoplasm. The enzyme catalyses oxaloacetate + GTP = phosphoenolpyruvate + GDP + CO2. The protein operates within carbohydrate biosynthesis; gluconeogenesis. In terms of biological role, catalyzes the conversion of oxaloacetate (OAA) to phosphoenolpyruvate (PEP), the rate-limiting step in the metabolic pathway that produces glucose from lactate and other precursors derived from the citric acid cycle. The chain is Phosphoenolpyruvate carboxykinase [GTP] from Renibacterium salmoninarum (strain ATCC 33209 / DSM 20767 / JCM 11484 / NBRC 15589 / NCIMB 2235).